The chain runs to 376 residues: uncharacterized protein (376 aa).

The N-terminal stretch at 1–31 (MSRHKVYKAISSYVIIAIIIIAIVAVVGVLL) is a signal peptide. Residues 37–57 (SSSSVTSTTTPTTSSSVSPSS) form a disordered region.

It belongs to the bacterial solute-binding protein 1 family. WtpA subfamily.

This is an uncharacterized protein from Sulfurisphaera tokodaii (strain DSM 16993 / JCM 10545 / NBRC 100140 / 7) (Sulfolobus tokodaii).